The chain runs to 511 residues: Maturase K (511 aa).

It belongs to the intron maturase 2 family. MatK subfamily.

It is found in the plastid. The protein localises to the chloroplast. Its function is as follows. Usually encoded in the trnK tRNA gene intron. Probably assists in splicing its own and other chloroplast group II introns. This Hordeum jubatum (Foxtail barley) protein is Maturase K.